A 509-amino-acid polypeptide reads, in one-letter code: Histidine--tRNA ligase (509 aa).

This sequence belongs to the class-II aminoacyl-tRNA synthetase family. Homodimer.

The protein localises to the cytoplasm. It catalyses the reaction tRNA(His) + L-histidine + ATP = L-histidyl-tRNA(His) + AMP + diphosphate + H(+). The chain is Histidine--tRNA ligase from Rhodopseudomonas palustris (strain TIE-1).